We begin with the raw amino-acid sequence, 1031 residues long: LRR receptor-like serine/threonine-protein kinase EFR (1031 aa).

A signal peptide spans 1-24; that stretch reads MKLSFSLVFNALTLLLQVCIFAQA. The Extracellular segment spans residues 25-653; sequence RFSNETDMQA…LSVRKKVVSG (629 aa). 3 N-linked (GlcNAc...) asparagine glycosylation sites follow: Asn28, Asn55, and Asn95. LRR repeat units follow at residues 98-120, 122-144, 146-168, 170-193, 194-216, 218-240, 242-264, 267-289, 291-312, and 315-335; these read FLRL…VGRL, RLQY…LSNC, RLST…LGSL, KLAI…GNLT, SLQK…VARL, QMVF…LYNI, SLES…FGYL, NLRR…LANI, SLER…SFGK, and NLWW…SGLE. Residues Asn127 and Asn143 are each glycosylated (N-linked (GlcNAc...) asparagine). Residues Asn180 and Asn191 are each glycosylated (N-linked (GlcNAc...) asparagine). Asn239 carries N-linked (GlcNAc...) asparagine glycosylation. A glycan (N-linked (GlcNAc...) asparagine) is linked at Asn288. Asn323, Asn329, Asn342, and Asn366 each carry an N-linked (GlcNAc...) asparagine glycan. LRR repeat units lie at residues 345 to 368, 370 to 392, 394 to 416, 418 to 440, 442 to 464, 466 to 487, 490 to 512, 514 to 536, 538 to 560, 561 to 584, and 585 to 597; these read QLEY…ANLS, TLTS…IGNL, SLQE…FGKL, NLQV…FGNM, RLQK…LGRC, YLLD…EILQ, SLAY…VGKL, LLVG…IGGC, SMEF…SRLV, SLKN…ASLP, and SLRN…NKFE. N-linked (GlcNAc...) asparagine glycosylation is present at Asn439. N-linked (GlcNAc...) asparagine glycosylation is present at Asn478. 3 N-linked (GlcNAc...) asparagine glycosylation sites follow: Asn571, Asn590, and Asn608. Residues 654 to 674 traverse the membrane as a helical segment; that stretch reads ICIGIASLLLIIIVASLCWFM. Topologically, residues 675 to 1031 are cytoplasmic; the sequence is KRKKKNNASD…WMLNTDMHTM (357 aa). Thr709 bears the Phosphothreonine mark. The Protein kinase domain maps to 712-1001; sequence FSSTNLIGSG…ELISIRSKFF (290 aa). ATP is bound by residues 718–726 and Lys741; that span reads IGSGNFGNV. Phosphotyrosine occurs at positions 791 and 836. Asp849 functions as the Proton acceptor in the catalytic mechanism. Residue Tyr897 is modified to Phosphotyrosine. The segment covering 1005 to 1020 has biased composition (polar residues); the sequence is TTITESPRDAPQSSPQ. Residues 1005 to 1031 form a disordered region; it reads TTITESPRDAPQSSPQEWMLNTDMHTM.

It belongs to the protein kinase superfamily. Ser/Thr protein kinase family. As to quaternary structure, binds to Pseudomonas syringae AvrPto1 and (via the kinase and cytoplasmic domains) to hopD2. Interacts with SERK3/BAK1, SERK4/BKK1, SERK1 and SERK2 in a specific ligand-induced manner. Binds to IOS1. Binds to BIK1 in the absence of pathogen elicitor; dissociates upon pathogen-associated molecular pattern (PAMP)-triggered activation. Post-translationally, autophosphorylated after elicitation with elfl18. Autophosphorylation is inhibited by the binding with avrPto1. Phosphorylation at T-836 is required for immune signaling. In terms of processing, polyubiquitinated at the kinase domain mediated by P.syringae AvrPtoB.

Its subcellular location is the cell membrane. It is found in the endomembrane system. It carries out the reaction L-seryl-[protein] + ATP = O-phospho-L-seryl-[protein] + ADP + H(+). It catalyses the reaction L-threonyl-[protein] + ATP = O-phospho-L-threonyl-[protein] + ADP + H(+). Functionally, constitutes the pattern-recognition receptor (PPR) that determines the specific perception of elongation factor Tu (EF-Tu), a potent elicitor of the defense response to pathogen-associated molecular patterns (PAMPs); phosphorylates BIK1 upon elicitation to regulate immune responses such as defense hormone expression (e.g. jasmonic acid (JA) and salicylic acid (SA)). Reduces transformation by Rhizobium radiobacter probably by inducing plant defense during the interaction. Binding to the effector AvrPto1 from P.syringae blocks the downstream plant immune response while interaction with hopD2 decreases the phosphorylation level of EFR upon elf18 treatment. Specific endoplasmic reticulum quality control components (ERD2B, CRT3, UGGT and STT3A) are required for the biogenesis of EFR. The protein is LRR receptor-like serine/threonine-protein kinase EFR of Arabidopsis thaliana (Mouse-ear cress).